We begin with the raw amino-acid sequence, 55 residues long: ATP synthase protein 8 (55 aa).

A helical membrane pass occupies residues leucine 4–leucine 24.

Belongs to the ATPase protein 8 family. As to quaternary structure, F-type ATPases have 2 components, CF(1) - the catalytic core - and CF(0) - the membrane proton channel.

Its subcellular location is the mitochondrion membrane. Functionally, mitochondrial membrane ATP synthase (F(1)F(0) ATP synthase or Complex V) produces ATP from ADP in the presence of a proton gradient across the membrane which is generated by electron transport complexes of the respiratory chain. F-type ATPases consist of two structural domains, F(1) - containing the extramembraneous catalytic core and F(0) - containing the membrane proton channel, linked together by a central stalk and a peripheral stalk. During catalysis, ATP synthesis in the catalytic domain of F(1) is coupled via a rotary mechanism of the central stalk subunits to proton translocation. Part of the complex F(0) domain. Minor subunit located with subunit a in the membrane. The polypeptide is ATP synthase protein 8 (mt-atp8) (Polypterus ornatipinnis (Ornate bichir)).